We begin with the raw amino-acid sequence, 61 residues long: Small ribosomal subunit protein uS14 (61 aa).

Zn(2+) is bound by residues Cys24, Cys27, Cys40, and Cys43.

It belongs to the universal ribosomal protein uS14 family. Zinc-binding uS14 subfamily. As to quaternary structure, part of the 30S ribosomal subunit. Contacts proteins S3 and S10. Zn(2+) serves as cofactor.

Functionally, binds 16S rRNA, required for the assembly of 30S particles and may also be responsible for determining the conformation of the 16S rRNA at the A site. This Borreliella afzelii (strain PKo) (Borrelia afzelii) protein is Small ribosomal subunit protein uS14.